Consider the following 593-residue polypeptide: Proteasome-associated ATPase (593 aa).

Positions 23–95 (LLSQISYLEE…LKEEVDRLGQ (73 aa)) form a coiled coil. 282–287 (GCGKTL) contributes to the ATP binding site. The docks into pockets in the proteasome alpha-ring stretch occupies residues 592–593 (YL).

This sequence belongs to the AAA ATPase family. Homohexamer. Assembles into a hexameric ring structure that caps the 20S proteasome core. Strongly interacts with the prokaryotic ubiquitin-like protein Pup through a hydrophobic interface; the interacting region of ARC lies in its N-terminal coiled-coil domain. There is one Pup binding site per ARC hexamer ring. Upon ATP-binding, the C-terminus of ARC interacts with the alpha-rings of the proteasome core, possibly by binding to the intersubunit pockets.

The protein operates within protein degradation; proteasomal Pup-dependent pathway. Functionally, ATPase which is responsible for recognizing, binding, unfolding and translocation of pupylated proteins into the bacterial 20S proteasome core particle. May be essential for opening the gate of the 20S proteasome via an interaction with its C-terminus, thereby allowing substrate entry and access to the site of proteolysis. Thus, the C-termini of the proteasomal ATPase may function like a 'key in a lock' to induce gate opening and therefore regulate proteolysis. This Geodermatophilus obscurus (strain ATCC 25078 / DSM 43160 / JCM 3152 / CCUG 61914 / KCC A-0152 / KCTC 9177 / NBRC 13315 / NRRL B-3577 / G-20) protein is Proteasome-associated ATPase.